Reading from the N-terminus, the 177-residue chain is 2-C-methyl-D-erythritol 2,4-cyclodiphosphate synthase (177 aa).

2 residues coordinate a divalent metal cation: Asp-8 and His-10. 4-CDP-2-C-methyl-D-erythritol 2-phosphate-binding positions include 8-10 and 34-35; these read DVH and HS. Position 42 (His-42) interacts with a divalent metal cation. 4-CDP-2-C-methyl-D-erythritol 2-phosphate contacts are provided by residues 56–58, 61–65, 132–135, Phe-139, and Arg-142; these read DIG, FPDTD, and TTEE.

This sequence belongs to the IspF family. In terms of assembly, homotrimer. A divalent metal cation serves as cofactor.

It carries out the reaction 4-CDP-2-C-methyl-D-erythritol 2-phosphate = 2-C-methyl-D-erythritol 2,4-cyclic diphosphate + CMP. Its pathway is isoprenoid biosynthesis; isopentenyl diphosphate biosynthesis via DXP pathway; isopentenyl diphosphate from 1-deoxy-D-xylulose 5-phosphate: step 4/6. In terms of biological role, involved in the biosynthesis of isopentenyl diphosphate (IPP) and dimethylallyl diphosphate (DMAPP), two major building blocks of isoprenoid compounds. Catalyzes the conversion of 4-diphosphocytidyl-2-C-methyl-D-erythritol 2-phosphate (CDP-ME2P) to 2-C-methyl-D-erythritol 2,4-cyclodiphosphate (ME-CPP) with a corresponding release of cytidine 5-monophosphate (CMP). The protein is 2-C-methyl-D-erythritol 2,4-cyclodiphosphate synthase of Agathobacter rectalis (strain ATCC 33656 / DSM 3377 / JCM 17463 / KCTC 5835 / VPI 0990) (Eubacterium rectale).